We begin with the raw amino-acid sequence, 397 residues long: Tyrosine aminotransferase (397 aa).

Substrate contacts are provided by Gly-34, Tyr-66, Trp-131, and Asn-184. At Lys-247 the chain carries N6-(pyridoxal phosphate)lysine. Arg-375 contacts substrate.

It belongs to the class-I pyridoxal-phosphate-dependent aminotransferase family. As to quaternary structure, homodimer. Pyridoxal 5'-phosphate is required as a cofactor.

The enzyme catalyses L-tyrosine + 2-oxoglutarate = 3-(4-hydroxyphenyl)pyruvate + L-glutamate. It carries out the reaction 4-methylsulfanyl-2-oxobutanoate + L-tyrosine = 3-(4-hydroxyphenyl)pyruvate + L-methionine. It catalyses the reaction an aromatic L-alpha-amino acid + 2-oxoglutarate = an aromatic oxo-acid + L-glutamate. The catalysed reaction is L-aspartate + 2-oxoglutarate = oxaloacetate + L-glutamate. It functions in the pathway amino-acid biosynthesis; L-methionine biosynthesis via salvage pathway; L-methionine from S-methyl-5-thio-alpha-D-ribose 1-phosphate: step 6/6. Inhibited by malate and nitrotyrosine by approximately 20% at the higher concentration. At 100 uM, canaline and carboxymethoxylamine inhibit aminotransferase activity by 35 and 70%, respectively. Addition of 1.0 mM carboxymethoxylamine lead to a complete inhibition of the aminotransferase activity. Catalyzes the formation of methionine from 2-keto-4-methylthiobutyrate (KMTB) primarily using aromatic amino acids (tyrosine, phenylalanine and tryptophan) or glutamate as the amino donors. Histidine, leucine, asparagine, or arginine are also functional amino donors but to a lesser extent. Can also use alpha-ketoglutarate, oxaloacetate and pyruvate as the amino acceptors. The sequence is that of Tyrosine aminotransferase (tyrB) from Klebsiella pneumoniae.